A 447-amino-acid chain; its full sequence is MIKIYDTMTRSLQDFIPLNEGKVNMYVCGPTVYNYIHIGNARSVVAFDTIRRYFEYCGYQVNYISNFTDVDDKIIKGAAEAGMDTKSFSDKFISAFMEDVAALGVKPATKNPRVIDYMDEIIDFVKVLVDKEFAYEANGDVYFRVSKSHHYAKLANKTLEDLEIGASGRVDGEGEIKENPLDFALWKSAKSGEVSWESPWGKGRPGWHIECSVMATEILGDTIDIHGGGADLEFPHHTNEIAQSEAKTGKTFANYWMHNGFVNVDNEKMSKSLGNFITVHDMLKSVDGQVIRFFLATQQYRKPVNFTEKAVHDAEVNLKYLKNTFNLPIQENANDEELEQFVKAFQEAMDDDFNTANGITVIFEMAKWINSGHYTSKVKETLAELLEIFGIVFQEEVLDADIESLIEQRQEARANRDFATADRIRDELAKQGIKLLDTKDGVRWTRD.

A Zn(2+)-binding site is contributed by Cys28. Positions 30-40 (PTVYNYIHIGN) match the 'HIGH' region motif. Zn(2+) contacts are provided by Cys211, His236, and Glu240. The short motif at 268–272 (KMSKS) is the 'KMSKS' region element. Lys271 is an ATP binding site.

The protein belongs to the class-I aminoacyl-tRNA synthetase family. As to quaternary structure, monomer. Requires Zn(2+) as cofactor.

The protein resides in the cytoplasm. It catalyses the reaction tRNA(Cys) + L-cysteine + ATP = L-cysteinyl-tRNA(Cys) + AMP + diphosphate. The sequence is that of Cysteine--tRNA ligase from Streptococcus agalactiae serotype III (strain NEM316).